A 369-amino-acid chain; its full sequence is Coiled-coil domain-containing protein 130 homolog (369 aa).

Positions 233-263 are enriched in basic and acidic residues; that stretch reads TRYRDTKTHDDHLESSRDRIESRRIFRRPEE. The disordered stretch occupies residues 233–369; that stretch reads TRYRDTKTHD…EYGNSSDDSD (137 aa). The segment covering 266-282 has biased composition (low complexity); sequence TPSTSSGSSGGAVPSAS. The span at 283-297 shows a compositional bias: basic and acidic residues; that stretch reads ERLKATMKAERDKRI. The segment covering 299 to 310 has biased composition (low complexity); that stretch reads ASFSTAGTSSAT.

Belongs to the CWC16 family.

This is Coiled-coil domain-containing protein 130 homolog from Caenorhabditis elegans.